A 353-amino-acid chain; its full sequence is Rhodopsin (353 aa).

At 1–36 (MNGTEGPYFYIPMVNTTGIVRSPYEYPQYYLVNPAA) the chain is on the extracellular side. Residues asparagine 2 and asparagine 15 are each glycosylated (N-linked (GlcNAc...) asparagine). A helical membrane pass occupies residues 37–61 (YAALGAYMFLLILVGFPVNFLTLYV). At 62–73 (TLEHKKLRTPLN) the chain is on the cytoplasmic side. The chain crosses the membrane as a helical span at residues 74–96 (YILLNLAVADLFMVLGGFTTTMY). Over 97 to 110 (TSMHGYFVLGRLGC) the chain is Extracellular. Cysteine 110 and cysteine 187 are disulfide-bonded. Residues 111–133 (NVEGFFATLGGEIALWSLVVLAI) form a helical membrane-spanning segment. Positions 134-136 (ERW) match the 'Ionic lock' involved in activated form stabilization motif. The Cytoplasmic portion of the chain corresponds to 134-152 (ERWVVVCKPISNFRFSEDH). The helical transmembrane segment at 153–173 (AIMGLAFTWVMASACAVPPLV) threads the bilayer. The Extracellular portion of the chain corresponds to 174–202 (GWSRYIPEGMQCSCGIDYYTRAEGFNNES). N-linked (GlcNAc...) asparagine glycosylation occurs at asparagine 200. The helical transmembrane segment at 203 to 224 (FVIYMFVCHFLIPLVVVFFCYG) threads the bilayer. Residues 225 to 252 (RLLCAVKEAAAAQQESETTQRAEREVSR) lie on the Cytoplasmic side of the membrane. The chain crosses the membrane as a helical span at residues 253 to 274 (MVVIMVVAFLVCWCPYAGVAWY). The Extracellular portion of the chain corresponds to 275-286 (IFTHQGSEFGPL). The chain crosses the membrane as a helical span at residues 287 to 308 (FMTFPAFFAKSSSIYNPMIYIC). Lysine 296 is modified (N6-(retinylidene)lysine). Topologically, residues 309–353 (MNKQFRHCMITTLCCGKNPFEEEEGASTTSKTEASSVSSSSVSPA) are cytoplasmic. Residues cysteine 322 and cysteine 323 are each lipidated (S-palmitoyl cysteine). Residues 330–353 (EEEGASTTSKTEASSVSSSSVSPA) are disordered. The span at 334–353 (ASTTSKTEASSVSSSSVSPA) shows a compositional bias: low complexity.

This sequence belongs to the G-protein coupled receptor 1 family. Opsin subfamily. Post-translationally, phosphorylated on some or all of the serine and threonine residues present in the C-terminal region. Contains one covalently linked retinal chromophore.

It localises to the membrane. Its subcellular location is the cell projection. The protein resides in the cilium. The protein localises to the photoreceptor outer segment. Functionally, photoreceptor required for image-forming vision at low light intensity. While most salt water fish species use retinal as chromophore, most freshwater fish use 3-dehydroretinal, or a mixture of retinal and 3-dehydroretinal. Light-induced isomerization of 11-cis to all-trans retinal triggers a conformational change that activates signaling via G-proteins. Subsequent receptor phosphorylation mediates displacement of the bound G-protein alpha subunit by arrestin and terminates signaling. The polypeptide is Rhodopsin (rho) (Chelon labrosus (Thicklip grey mullet)).